The chain runs to 207 residues: ATP-dependent Clp protease proteolytic subunit (207 aa).

Ser111 acts as the Nucleophile in catalysis. Residue His136 is part of the active site.

This sequence belongs to the peptidase S14 family. Fourteen ClpP subunits assemble into 2 heptameric rings which stack back to back to give a disk-like structure with a central cavity, resembling the structure of eukaryotic proteasomes.

The protein localises to the cytoplasm. It catalyses the reaction Hydrolysis of proteins to small peptides in the presence of ATP and magnesium. alpha-casein is the usual test substrate. In the absence of ATP, only oligopeptides shorter than five residues are hydrolyzed (such as succinyl-Leu-Tyr-|-NHMec, and Leu-Tyr-Leu-|-Tyr-Trp, in which cleavage of the -Tyr-|-Leu- and -Tyr-|-Trp bonds also occurs).. Its function is as follows. Cleaves peptides in various proteins in a process that requires ATP hydrolysis. Has a chymotrypsin-like activity. Plays a major role in the degradation of misfolded proteins. In Aliivibrio fischeri (strain ATCC 700601 / ES114) (Vibrio fischeri), this protein is ATP-dependent Clp protease proteolytic subunit.